A 3511-amino-acid polypeptide reads, in one-letter code: Unconventional myosin-XV (3511 aa).

4 disordered regions span residues 1–44 (MADE…TPKI), 574–690 (KKPI…SLRQ), 712–1030 (FAEP…PNKN), and 1105–1135 (VSSF…PQAC). Over residues 622–634 (SQPQARNNNNSHG) the composition is skewed to polar residues. Pro residues predominate over residues 654–672 (PPMPAPSPSPASPLTPPFS). Residues 769–792 (PSLRSLPGQGYHSPLGPLSPQLSL) are compositionally biased toward low complexity. The segment covering 797 to 807 (FQPPFPPPPRR) has biased composition (pro residues). The Myosin motor domain maps to 1206-1883 (DGVEDMTQLE…LHQLLESMRE (678 aa)). An ATP-binding site is contributed by 1299-1306 (GESGSGKT). Positions 1307 to 1334 (EATKLILRCLAAMNQRRDVMQQIKILEA) form a coiled coil. The segment at 1776-1783 (FVRCLKPN) is actin-binding. Positions 1872 to 2013 (EHLHQLLESM…SSGPRVAVVR (142 aa)) are neck or regulatory domain. 2 consecutive IQ domains span residues 1886–1908 (QNRA…HFRS) and 1909–1938 (LRRK…SLLK). The segment at 2014 to 3511 (APRLQAEPCV…TLPPSEITLL (1498 aa)) is tail. Positions 2049–2195 (MLTVPLKMPL…PTQLEWTAIQ (147 aa)) constitute a MyTH4 1 domain. Disordered stretches follow at residues 2330–2359 (SHKE…GEST), 2392–2425 (YRMK…PIPG), 2460–2509 (PLSA…SVAK), 2565–2584 (KQPP…GKVF), and 2629–2648 (RPCM…PPED). Positions 2337-2351 (NGETEAQRWTSNRQA) are enriched in polar residues. Residues 2395-2406 (KGGGQPGGGGGS) are compositionally biased toward gly residues. Positions 2410 to 2420 (DTSRRPPEPKL) are enriched in basic and acidic residues. Over residues 2573-2584 (PEARRTDGGKVF) the composition is skewed to basic and acidic residues. The region spanning 2848–2934 (KDSDYVVAVR…PSELVQPAAA (87 aa)) is the SH3 domain. A disordered region spans residues 2964 to 2984 (EVGRRREGPPVRARSADSGED). Basic and acidic residues predominate over residues 2965–2980 (VGRRREGPPVRARSAD). The region spanning 3031–3185 (FTKVPIQESL…PSNMELRAML (155 aa)) is the MyTH4 2 domain. The 322-residue stretch at 3190-3511 (SKRQLFLLPG…TLPPSEITLL (322 aa)) folds into the FERM domain.

It belongs to the TRAFAC class myosin-kinesin ATPase superfamily. Myosin family. In terms of assembly, interacts with the third PDZ domain of WHRN which is necessary for localization of WHRN to stereocilium tips. Interacts with FASLG. Interacts with EPS8. In terms of tissue distribution, in the developing inner ear, expressed in cochlea and vestibular apparatus. Expression appears to be restricted to cochlear neurosensory cells and upper epithelial layer of macula saccula. Also expressed in macula utriculi and cristae ampullaris of the semicircular canals. In adult cochlear hair cells, highest expression in stereocilia and apical body.

It localises to the cell projection. It is found in the stereocilium. Its subcellular location is the cytoplasm. The protein resides in the cytoskeleton. Myosins are actin-based motor molecules with ATPase activity. Unconventional myosins serve in intracellular movements. Their highly divergent tails are presumed to bind to membranous compartments, which would be moved relative to actin filaments. Required for the arrangement of stereocilia in mature hair bundles. In Mus musculus (Mouse), this protein is Unconventional myosin-XV (Myo15a).